A 223-amino-acid polypeptide reads, in one-letter code: NAD(P)H-hydrate epimerase (223 aa).

The region spanning 9–211 is the YjeF N-terminal domain; sequence AIKLDEELMG…ELKDKLHLIL (203 aa). 60–64 is a binding site for (6S)-NADPHX; the sequence is NNGGD. K(+)-binding residues include Asn61 and Asp120. (6S)-NADPHX is bound by residues 124–130 and Asp153; that span reads GFSFKGP. Ser156 contacts K(+).

Belongs to the NnrE/AIBP family. Requires K(+) as cofactor.

The enzyme catalyses (6R)-NADHX = (6S)-NADHX. It carries out the reaction (6R)-NADPHX = (6S)-NADPHX. Catalyzes the epimerization of the S- and R-forms of NAD(P)HX, a damaged form of NAD(P)H that is a result of enzymatic or heat-dependent hydration. This is a prerequisite for the S-specific NAD(P)H-hydrate dehydratase to allow the repair of both epimers of NAD(P)HX. The protein is NAD(P)H-hydrate epimerase of Entamoeba histolytica (strain ATCC 30459 / HM-1:IMSS / ABRM).